We begin with the raw amino-acid sequence, 695 residues long: Eukaryotic translation initiation factor 3 subunit B (695 aa).

A compositionally biased stretch (basic and acidic residues) spans 1-10 (MAKKKGDEKA). Residues 1 to 43 (MAKKKGDEKANPAPQSDNEEQNFEEEPDFDDPEDFVEIPEEEL) form a disordered region. Residues 17-43 (DNEEQNFEEEPDFDDPEDFVEIPEEEL) show a composition bias toward acidic residues. An RRM domain is found at 60–144 (NVVVVDGCPQ…HTFLVNLFTD (85 aa)). WD repeat units follow at residues 164–205 (KVQS…PLLL), 295–335 (PPDE…LLDK), 338–373 (IKIP…TLLE), and 444–486 (EIKE…APTL).

This sequence belongs to the eIF-3 subunit B family. In terms of assembly, component of the eukaryotic translation initiation factor 3 (eIF-3) complex.

Its subcellular location is the cytoplasm. RNA-binding component of the eukaryotic translation initiation factor 3 (eIF-3) complex, which is involved in protein synthesis of a specialized repertoire of mRNAs and, together with other initiation factors, stimulates binding of mRNA and methionyl-tRNAi to the 40S ribosome. The eIF-3 complex specifically targets and initiates translation of a subset of mRNAs involved in cell proliferation. This is Eukaryotic translation initiation factor 3 subunit B from Bombyx mori (Silk moth).